The primary structure comprises 307 residues: Ornithine carbamoyltransferase (307 aa).

Carbamoyl phosphate is bound by residues 53–56 (STRT), Gln80, Arg104, and 131–134 (HPCQ). L-ornithine is bound by residues Asn162, Asp219, and 223-224 (SM). Residues 259 to 260 (CL) and Arg287 each bind carbamoyl phosphate.

This sequence belongs to the aspartate/ornithine carbamoyltransferase superfamily. OTCase family.

The protein localises to the cytoplasm. The catalysed reaction is carbamoyl phosphate + L-ornithine = L-citrulline + phosphate + H(+). Its pathway is amino-acid biosynthesis; L-arginine biosynthesis; L-arginine from L-ornithine and carbamoyl phosphate: step 1/3. Functionally, reversibly catalyzes the transfer of the carbamoyl group from carbamoyl phosphate (CP) to the N(epsilon) atom of ornithine (ORN) to produce L-citrulline. This chain is Ornithine carbamoyltransferase, found in Psychrobacter arcticus (strain DSM 17307 / VKM B-2377 / 273-4).